A 129-amino-acid polypeptide reads, in one-letter code: Large ribosomal subunit protein bL17 (129 aa).

This sequence belongs to the bacterial ribosomal protein bL17 family. Part of the 50S ribosomal subunit. Contacts protein L32.

The sequence is that of Large ribosomal subunit protein bL17 from Hahella chejuensis (strain KCTC 2396).